A 55-amino-acid chain; its full sequence is Large ribosomal subunit protein bL33 (55 aa).

The protein belongs to the bacterial ribosomal protein bL33 family.

The sequence is that of Large ribosomal subunit protein bL33 from Xanthomonas axonopodis pv. citri (strain 306).